A 328-amino-acid chain; its full sequence is NADH-quinone oxidoreductase subunit H 2 (328 aa).

8 consecutive transmembrane segments (helical) span residues 3–23 (LIVALGVIVFKVALVIAILLL), 77–97 (FLFKLAPILALAPPFVVFAAI), 119–139 (VALLFVFAVIGLEVYGVIFGG), 165–185 (MGFAVIGVVMLAQSMSLLDIV), 191–211 (VWNVVYQPIGFFVFFVAGLAE), 250–270 (MVLVSVLTVILFFGGWNGVLI), 272–292 (LPPLLWFLLKVAFFVYLFMWF), and 307–327 (IGWKVLLPLSLANIIISGVVF).

It belongs to the complex I subunit 1 family. As to quaternary structure, NDH-1 is composed of 14 different subunits. Subunits NuoA, H, J, K, L, M, N constitute the membrane sector of the complex.

It localises to the cell inner membrane. It carries out the reaction a quinone + NADH + 5 H(+)(in) = a quinol + NAD(+) + 4 H(+)(out). Functionally, NDH-1 shuttles electrons from NADH, via FMN and iron-sulfur (Fe-S) centers, to quinones in the respiratory chain. The immediate electron acceptor for the enzyme in this species is believed to be ubiquinone. Couples the redox reaction to proton translocation (for every two electrons transferred, four hydrogen ions are translocated across the cytoplasmic membrane), and thus conserves the redox energy in a proton gradient. This subunit may bind ubiquinone. This Rhizobium meliloti (strain 1021) (Ensifer meliloti) protein is NADH-quinone oxidoreductase subunit H 2.